A 226-amino-acid polypeptide reads, in one-letter code: Probable chemoreceptor glutamine deamidase CheD (226 aa).

Belongs to the CheD family.

The catalysed reaction is L-glutaminyl-[protein] + H2O = L-glutamyl-[protein] + NH4(+). Its function is as follows. Probably deamidates glutamine residues to glutamate on methyl-accepting chemotaxis receptors (MCPs), playing an important role in chemotaxis. This chain is Probable chemoreceptor glutamine deamidase CheD, found in Bordetella avium (strain 197N).